The primary structure comprises 545 residues: Glucose-6-phosphate isomerase (545 aa).

Catalysis depends on glutamate 351, which acts as the Proton donor. Residues histidine 382 and lysine 510 contribute to the active site.

It belongs to the GPI family.

The protein resides in the cytoplasm. The enzyme catalyses alpha-D-glucose 6-phosphate = beta-D-fructose 6-phosphate. It functions in the pathway carbohydrate biosynthesis; gluconeogenesis. It participates in carbohydrate degradation; glycolysis; D-glyceraldehyde 3-phosphate and glycerone phosphate from D-glucose: step 2/4. Functionally, catalyzes the reversible isomerization of glucose-6-phosphate to fructose-6-phosphate. This chain is Glucose-6-phosphate isomerase, found in Shewanella baltica (strain OS195).